The primary structure comprises 1109 residues: Carbamoyl phosphate synthase large chain (1109 aa).

Positions 1–402 are carboxyphosphate synthetic domain; the sequence is MPRRTDLTSV…ALQKAMRSID (402 aa). ATP-binding residues include Arg129, Arg169, Gly175, Gly176, Glu208, Ile210, Glu215, Gly241, Val242, His243, Gln285, and Glu299. Residues 133 to 328 enclose the ATP-grasp 1 domain; that stretch reads KGVVERCGAE…IAKIAARLAV (196 aa). 3 residues coordinate Mg(2+): Gln285, Glu299, and Asn301. Mn(2+) is bound by residues Gln285, Glu299, and Asn301. Residues 403–548 form an oligomerization domain region; the sequence is KAGSTFHWRG…YHYSSYDAET (146 aa). Residues 549 to 956 are carbamoyl phosphate synthetic domain; the sequence is EVQPRDRPAV…AFAKSQAAAY (408 aa). The ATP-grasp 2 domain occupies 678–876; the sequence is GEVLVAAGLP…LAKAASLLMA (199 aa). ATP contacts are provided by Arg714, Arg760, Leu762, Glu767, Gly792, Ile793, His794, Ser795, Gln835, and Glu847. The Mg(2+) site is built by Gln835, Glu847, and Asn849. Mn(2+)-binding residues include Gln835, Glu847, and Asn849. One can recognise an MGS-like domain in the interval 957 to 1102; the sequence is GGLPTSGRVF…QEHDAARAAR (146 aa). An allosteric domain region spans residues 957-1109; that stretch reads GGLPTSGRVF…AARETEGVHA (153 aa).

Belongs to the CarB family. Composed of two chains; the small (or glutamine) chain promotes the hydrolysis of glutamine to ammonia, which is used by the large (or ammonia) chain to synthesize carbamoyl phosphate. Tetramer of heterodimers (alpha,beta)4. The cofactor is Mg(2+). Requires Mn(2+) as cofactor.

The enzyme catalyses hydrogencarbonate + L-glutamine + 2 ATP + H2O = carbamoyl phosphate + L-glutamate + 2 ADP + phosphate + 2 H(+). It catalyses the reaction hydrogencarbonate + NH4(+) + 2 ATP = carbamoyl phosphate + 2 ADP + phosphate + 2 H(+). Its pathway is amino-acid biosynthesis; L-arginine biosynthesis; carbamoyl phosphate from bicarbonate: step 1/1. It functions in the pathway pyrimidine metabolism; UMP biosynthesis via de novo pathway; (S)-dihydroorotate from bicarbonate: step 1/3. In terms of biological role, large subunit of the glutamine-dependent carbamoyl phosphate synthetase (CPSase). CPSase catalyzes the formation of carbamoyl phosphate from the ammonia moiety of glutamine, carbonate, and phosphate donated by ATP, constituting the first step of 2 biosynthetic pathways, one leading to arginine and/or urea and the other to pyrimidine nucleotides. The large subunit (synthetase) binds the substrates ammonia (free or transferred from glutamine from the small subunit), hydrogencarbonate and ATP and carries out an ATP-coupled ligase reaction, activating hydrogencarbonate by forming carboxy phosphate which reacts with ammonia to form carbamoyl phosphate. This is Carbamoyl phosphate synthase large chain from Beutenbergia cavernae (strain ATCC BAA-8 / DSM 12333 / CCUG 43141 / JCM 11478 / NBRC 16432 / NCIMB 13614 / HKI 0122).